The chain runs to 266 residues: Small ribosomal subunit protein eS1 (266 aa).

Residues 237–266 (DGGSKTGEVGETGSKVDRPEGYEPPVQETV) are disordered.

This sequence belongs to the eukaryotic ribosomal protein eS1 family. As to quaternary structure, component of the small ribosomal subunit. Mature ribosomes consist of a small (40S) and a large (60S) subunit. The 40S subunit contains about 33 different proteins and 1 molecule of RNA (18S). The 60S subunit contains about 49 different proteins and 3 molecules of RNA (28S, 5.8S and 5S).

It localises to the cytoplasm. The polypeptide is Small ribosomal subunit protein eS1 (Lysiphlebus testaceipes (Greenbugs aphid parastoid)).